Here is a 184-residue protein sequence, read N- to C-terminus: ATP synthase subunit b, chloroplastic (184 aa).

Residues 27-49 (LATNLINLSVVLGVLIFFGKGVL) form a helical membrane-spanning segment.

Belongs to the ATPase B chain family. As to quaternary structure, F-type ATPases have 2 components, F(1) - the catalytic core - and F(0) - the membrane proton channel. F(1) has five subunits: alpha(3), beta(3), gamma(1), delta(1), epsilon(1). F(0) has four main subunits: a(1), b(1), b'(1) and c(10-14). The alpha and beta chains form an alternating ring which encloses part of the gamma chain. F(1) is attached to F(0) by a central stalk formed by the gamma and epsilon chains, while a peripheral stalk is formed by the delta, b and b' chains.

Its subcellular location is the plastid. It is found in the chloroplast thylakoid membrane. In terms of biological role, f(1)F(0) ATP synthase produces ATP from ADP in the presence of a proton or sodium gradient. F-type ATPases consist of two structural domains, F(1) containing the extramembraneous catalytic core and F(0) containing the membrane proton channel, linked together by a central stalk and a peripheral stalk. During catalysis, ATP synthesis in the catalytic domain of F(1) is coupled via a rotary mechanism of the central stalk subunits to proton translocation. Functionally, component of the F(0) channel, it forms part of the peripheral stalk, linking F(1) to F(0). This Liriodendron tulipifera (Tuliptree) protein is ATP synthase subunit b, chloroplastic.